Consider the following 330-residue polypeptide: Phosphate acyltransferase (330 aa).

The protein belongs to the PlsX family. In terms of assembly, homodimer. Probably interacts with PlsY.

The protein resides in the cytoplasm. The enzyme catalyses a fatty acyl-[ACP] + phosphate = an acyl phosphate + holo-[ACP]. It participates in lipid metabolism; phospholipid metabolism. In terms of biological role, catalyzes the reversible formation of acyl-phosphate (acyl-PO(4)) from acyl-[acyl-carrier-protein] (acyl-ACP). This enzyme utilizes acyl-ACP as fatty acyl donor, but not acyl-CoA. In Bacillus cereus (strain AH820), this protein is Phosphate acyltransferase.